Reading from the N-terminus, the 75-residue chain is uncharacterized protein (75 aa).

This is an uncharacterized protein from Acidianus filamentous virus 1 (isolate United States/Yellowstone) (AFV-1).